The sequence spans 513 residues: Nuclear pore complex protein NUP58 (513 aa).

3 disordered regions span residues 28-62 (QTNS…QPQQ), 217-239 (SVGS…GQQQ), and 356-513 (RETA…TTRR). The span at 30 to 50 (NSIFSQSQPQQTNSIFSQSQP) shows a compositional bias: polar residues. Low complexity-rich tracts occupy residues 51–62 (QQTNSIFSQPQQ) and 217–227 (SVGSQPSQGQG). The span at 356 to 365 (RETAKQEAAA) shows a compositional bias: basic and acidic residues. A compositionally biased stretch (low complexity) spans 377 to 386 (STTSTQPSTQ). The span at 393–427 (SSATPGGSNPPQTSVPTSNPSSGAGFSFLNTPASG) shows a compositional bias: polar residues. Low complexity predominate over residues 428 to 446 (PSSSLFATPSSTAPTSSLF). Repeat copies occupy residues 446 to 447 (FG), 458 to 459 (FG), 466 to 467 (FG), 473 to 474 (FG), 486 to 487 (FG), and 497 to 498 (FG). The segment at 446–498 (FGPSPTPTQTPLFGSSPASTFGSTQSLFGQTTPSLTMPSQFGGATPGSGASFG) is 6 X 2 AA repeats of F-G. Positions 452–484 (PTQTPLFGSSPASTFGSTQSLFGQTTPSLTMPS) are enriched in polar residues. A compositionally biased stretch (basic residues) spans 504–513 (SRPKSRTTRR).

It belongs to the NUP58 family. Part of the nuclear pore complex (NPC). The NPC has an eight-fold symmetrical structure comprising a central transport channel and two rings, the cytoplasmic and nuclear rings, to which eight filaments are attached. The cytoplasmic filaments have loose ends, while the nuclear filaments are joined in a distal ring, forming a nuclear basket. NPCs are highly dynamic in configuration and composition, and can be devided in 3 subcomplexes, the NUP62 subcomplex, the NUP107-160 subcomplex and the NUP93 subcomplex, containing approximately 30 different nucleoporin proteins. Interacts with GAI, NUP62, SKP1A and SKP1B. In terms of tissue distribution, ubiquitous. Higherst expression in cauline leaves, lowest in roots.

The protein localises to the nucleus envelope. It localises to the nucleus. Its subcellular location is the nuclear pore complex. Its function is as follows. Involved in nucleocytoplasmic trafficking. May have regulatory roles in the gibberellin pathway, in auxin signaling and in light perception. This chain is Nuclear pore complex protein NUP58, found in Arabidopsis thaliana (Mouse-ear cress).